A 1482-amino-acid chain; its full sequence is Calcium-dependent protein kinase 6 (1482 aa).

Disordered regions lie at residues 250–320 (TNNY…IRPN) and 739–760 (SENF…DDSN). A compositionally biased stretch (polar residues) spans 254–264 (AHDNNQDSNSY). A compositionally biased stretch (acidic residues) spans 277-301 (EEDNDTGDTYADNEEDEDNRDDNDD). Positions 302-318 (YSQYNQCEVESDTNQIR) are enriched in polar residues. Residues 739–748 (SENFSNNFND) show a composition bias toward low complexity. The segment covering 749-760 (NKQKSLKNDDSN) has biased composition (basic and acidic residues). EF-hand domains lie at 931 to 966 (IFER…LCYN) and 972 to 1007 (VDKK…LLKQ). Residues Asp-985, Ser-987, Asn-989, Cys-991, and Asp-996 each contribute to the Ca(2+) site. The Protein kinase domain occupies 1043–1295 (LSFKKILGCG…AAVLLHHPWF (253 aa)). ATP is bound by residues 1049–1057 (LGCGAFGEV) and Lys-1072. Asp-1162 acts as the Proton acceptor in catalysis. EF-hand domains follow at residues 1338 to 1373 (NHVK…AGVK), 1376 to 1406 (DINR…RWKN), 1407 to 1442 (IDST…NGVN), and 1468 to 1482 (KISF…LSTF). 5 residues coordinate Ca(2+): Asp-1351, Asn-1353, Asn-1355, Ser-1357, and Glu-1362. Asp-1420, Asp-1422, Asp-1424, Tyr-1426, and Asp-1431 together coordinate Ca(2+).

This sequence belongs to the protein kinase superfamily. Ser/Thr protein kinase family. CDPK subfamily. Mg(2+) serves as cofactor.

The enzyme catalyses L-seryl-[protein] + ATP = O-phospho-L-seryl-[protein] + ADP + H(+). It carries out the reaction L-threonyl-[protein] + ATP = O-phospho-L-threonyl-[protein] + ADP + H(+). With respect to regulation, activated by calcium. Calcium-dependent protein kinase which acts as a sensor and effector of intracellular Ca(2+) levels. In sporozoites, probably involved in the secretion of the cysteine protease that cleaves circumsporozoite protein CSP, thereby exposing CSP TSR domain, which binds with high affinity to highly sulfated heparan sulfate proteoglycans (HSPGs), resulting in productive invasion of the host hepatocytes. The polypeptide is Calcium-dependent protein kinase 6 (Plasmodium berghei (strain Anka)).